A 160-amino-acid chain; its full sequence is Putative NrdI-like protein (160 aa).

This sequence belongs to the NrdI family.

The protein is Putative NrdI-like protein of Streptococcus pyogenes serotype M3 (strain ATCC BAA-595 / MGAS315).